Here is a 330-residue protein sequence, read N- to C-terminus: Type I restriction enzyme MpnII specificity subunit (330 aa).

Belongs to the type-I restriction system S methylase family. In terms of assembly, the methyltransferase is composed of M and S polypeptides.

The specificity (S) subunit of a type I restriction enzyme; this subunit dictates DNA sequence specificity. The M and S subunits together form a methyltransferase (MTase) that probably methylates A-2 on the top strand and A-3 on the bottom strand of the sequence 5'-GAN(7)TAY-3'. As the bacterial DNA is methylated on this sequence and this is the only type I methylase in the genome, it is probably responsible for all of the methylation on this site in the genome. The R subunit has multiple frameshifts and is probably not expressed in this bacteria. In Mycoplasma pneumoniae (strain ATCC 29342 / M129 / Subtype 1) (Mycoplasmoides pneumoniae), this protein is Type I restriction enzyme MpnII specificity subunit.